The sequence spans 273 residues: Dermonecrotic toxin LspaSicTox-alphaIA2iv (273 aa).

Residue histidine 5 is part of the active site. Residues glutamate 25 and aspartate 27 each contribute to the Mg(2+) site. Catalysis depends on histidine 41, which acts as the Nucleophile. 2 disulfides stabilise this stretch: cysteine 45-cysteine 51 and cysteine 47-cysteine 190. Aspartate 85 contacts Mg(2+).

It belongs to the arthropod phospholipase D family. Class II subfamily. Requires Mg(2+) as cofactor. Expressed by the venom gland.

Its subcellular location is the secreted. The enzyme catalyses an N-(acyl)-sphingosylphosphocholine = an N-(acyl)-sphingosyl-1,3-cyclic phosphate + choline. It carries out the reaction an N-(acyl)-sphingosylphosphoethanolamine = an N-(acyl)-sphingosyl-1,3-cyclic phosphate + ethanolamine. It catalyses the reaction a 1-acyl-sn-glycero-3-phosphocholine = a 1-acyl-sn-glycero-2,3-cyclic phosphate + choline. The catalysed reaction is a 1-acyl-sn-glycero-3-phosphoethanolamine = a 1-acyl-sn-glycero-2,3-cyclic phosphate + ethanolamine. Dermonecrotic toxins cleave the phosphodiester linkage between the phosphate and headgroup of certain phospholipids (sphingolipid and lysolipid substrates), forming an alcohol (often choline) and a cyclic phosphate. This toxin acts on sphingomyelin (SM). It may also act on ceramide phosphoethanolamine (CPE), lysophosphatidylcholine (LPC) and lysophosphatidylethanolamine (LPE), but not on lysophosphatidylserine (LPS), and lysophosphatidylglycerol (LPG). It acts by transphosphatidylation, releasing exclusively cyclic phosphate products as second products. Induces dermonecrosis, hemolysis, increased vascular permeability, edema, inflammatory response, and platelet aggregation. The polypeptide is Dermonecrotic toxin LspaSicTox-alphaIA2iv (Loxosceles spadicea (Recluse spider)).